The sequence spans 591 residues: Alpha-(1-&gt;6)-mannopyranosyltransferase Rv1459c (591 aa).

The next 13 membrane-spanning stretches (helical) occupy residues 40 to 60, 80 to 100, 117 to 137, 201 to 221, 235 to 255, 259 to 279, 321 to 341, 367 to 387, 408 to 428, 441 to 461, 473 to 493, 502 to 522, and 527 to 547; these read FGATGTVLMAIGALGAGARPV, VSLTMTTTGAVMMALAWLMLG, TLLLWMLPLLIAPPMYSKDVY, IVAAVLCHRLVVLIGVTLIVW, VSALWLGAANPLLIMHLVAGI, ALMLGLMLTGVEFALRGLDMA, EWGPLAMLLAGSILITLSSQV, LLLAAAVMASLTLAIMAILGW, WMSPPTLLALGTGHVGILLGL, AIGVLIITVMVCWLLLAVLRG, LAVTVLLFPVVQPWYLLWAII, PGFRVAAILATLIVGIFGPTA, and FALFQIVDATAASAIIVILLI. Positions 569–591 are disordered; sequence ESASKTPATRRPTAAPDAYADST. Over residues 574–584 the composition is skewed to low complexity; it reads TPATRRPTAAP.

Belongs to the MptA/B family.

The protein localises to the membrane. In terms of biological role, catalyzes the addition of alpha-(1-&gt;6)-mannose residue. The polypeptide is Alpha-(1-&gt;6)-mannopyranosyltransferase Rv1459c (Mycobacterium tuberculosis (strain ATCC 25618 / H37Rv)).